A 458-amino-acid chain; its full sequence is Retinoic acid receptor alpha (458 aa).

Residues 1–87 (MSSKDNTCPP…PPPLPRIYKP (87 aa)) form a modulating region. The disordered stretch occupies residues 39 to 78 (GGLPGVQHQPPLSGYSTPSPATIETQSTSSEEIVPSPPTP). Residues 52-69 (GYSTPSPATIETQSTSSE) show a composition bias toward polar residues. 2 NR C4-type zinc fingers span residues 88–108 (CFVC…CEGC) and 124–148 (CHRD…LQKC). Positions 88 to 153 (CFVCQDKSSG…RLQKCFEVGM (66 aa)) form a DNA-binding region, nuclear receptor. The hinge stretch occupies residues 154-182 (SKESVRNDRNKKKKESPKPEAIESYILSP). In terms of domain architecture, NR LBD spans 183–417 (ETQDLIEKVQ…LIQEMLENSE (235 aa)). Positions 407–415 (PLIQEMLEN) match the 9aaTAD motif. The interval 419–458 (LDTLGGGASSDAPVTPVAPGSCSPSLSPSSTHSSPSTHSP) is disordered. A compositionally biased stretch (low complexity) spans 439–458 (SCSPSLSPSSTHSSPSTHSP).

This sequence belongs to the nuclear hormone receptor family. NR1 subfamily. As to quaternary structure, heterodimer; with an rxr molecule. Binds DNA preferentially as a rar/rxr heterodimer.

It is found in the nucleus. Functionally, receptor for retinoic acid. Retinoic acid receptors bind as heterodimers to their target response elements in response to their ligands, all-trans or 9-cis retinoic acid, and regulate gene expression in various biological processes. The rar/rxr heterodimers bind to the retinoic acid response elements (RARE) composed of tandem 5'-AGGTCA-3' sites known as DR1-DR5. Required for primary neurogenesis and for anteroposterior neural patterning. This chain is Retinoic acid receptor alpha (rara), found in Xenopus laevis (African clawed frog).